The chain runs to 252 residues: 5-oxoprolinase subunit A (252 aa).

Belongs to the LamB/PxpA family. Forms a complex composed of PxpA, PxpB and PxpC.

The enzyme catalyses 5-oxo-L-proline + ATP + 2 H2O = L-glutamate + ADP + phosphate + H(+). Catalyzes the cleavage of 5-oxoproline to form L-glutamate coupled to the hydrolysis of ATP to ADP and inorganic phosphate. In Mycolicibacterium gilvum (strain PYR-GCK) (Mycobacterium gilvum (strain PYR-GCK)), this protein is 5-oxoprolinase subunit A.